We begin with the raw amino-acid sequence, 218 residues long: C-type lectin domain family 2 member H (218 aa).

The Cytoplasmic portion of the chain corresponds to 1–52 (MNAAKVETSSMGMLQRADLTAADCLQEGEMGKKIQGKCFRIISTVSPVKLYC). The helical; Signal-anchor for type II membrane protein transmembrane segment at 53 to 73 (CYGVIMVLTVAVIALSVALSV) threads the bilayer. Residues 74 to 218 (RNKIPAMEDR…SRVGSVPRHV (145 aa)) lie on the Extracellular side of the membrane. C90 and C101 are oxidised to a cystine. The region spanning 97–201 (FGSKCFYFSE…SYTHRKWICS (105 aa)) is the C-type lectin domain. An N-linked (GlcNAc...) asparagine glycan is attached at N110. The cysteines at positions 118 and 200 are disulfide-linked.

In terms of tissue distribution, detected in ileum, liver, kidney and in IL2-activated natural killer cells.

It is found in the cell membrane. Functionally, lectin-type cell surface receptor. This is C-type lectin domain family 2 member H (Clec2h) from Mus musculus (Mouse).